The following is a 464-amino-acid chain: Argininosuccinate lyase (464 aa).

It belongs to the lyase 1 family. Argininosuccinate lyase subfamily.

The protein localises to the cytoplasm. It catalyses the reaction 2-(N(omega)-L-arginino)succinate = fumarate + L-arginine. It functions in the pathway amino-acid biosynthesis; L-arginine biosynthesis; L-arginine from L-ornithine and carbamoyl phosphate: step 3/3. Strongly inhibited by L-arginine. Inhibitory effects are lowered at pH 7.0 compared to those at pH 8.0. At 37 degrees Celsius and pH 7.5, activity decreases to 73% and 31% in the presence of 1 mM and 10 mM arginine, respectively. Activity also decreases to 84%, 93%, 82% and 85% in the presence of 10 mM sodium citrate, citrulline, asparatate and glutamate, respectively. Activity decreases to 96% in presence of 1 mM L-lysine. Catalyzes the last step of arginine biosynthesis, the conversion of argininosuccinate into L-arginine and fumarate. This Arthrospira platensis (strain NIES-39 / UTEX 3086 / IAM M-135) (Spirulina platensis) protein is Argininosuccinate lyase.